The sequence spans 528 residues: Nucleolar GTP-binding protein 1 (528 aa).

The region spanning 168-335 (RTLLVCGFPN…VKAMACDLLL (168 aa)) is the OBG-type G domain. GTP-binding positions include 174–181 (GFPNVGKS), 220–224 (DTPGI), and 287–290 (SKSD). The interval 470 to 528 (PDSWKHRSRNSGGDIAVHVRRDSKTQVAQPPRLPSKKKARFDDKHYYDRKPKHLYRGRK) is disordered. The segment covering 509–518 (RFDDKHYYDR) has biased composition (basic and acidic residues). The span at 519–528 (KPKHLYRGRK) shows a compositional bias: basic residues.

Belongs to the TRAFAC class OBG-HflX-like GTPase superfamily. OBG GTPase family. NOG subfamily.

The protein localises to the nucleus. It is found in the nucleolus. Its function is as follows. Involved in the biogenesis of the 60S ribosomal subunit. This chain is Nucleolar GTP-binding protein 1 (NOG1), found in Encephalitozoon cuniculi (strain GB-M1) (Microsporidian parasite).